The sequence spans 200 residues: Phospholipase A2 inhibitor gamma subunit A (200 aa).

The signal sequence occupies residues methionine 1–serine 19. Cystine bridges form between cysteine 22–cysteine 46, cysteine 25–cysteine 32, cysteine 39–cysteine 67, cysteine 73–cysteine 94, cysteine 95–cysteine 100, cysteine 118–cysteine 143, cysteine 136–cysteine 165, and cysteine 169–cysteine 191. A glycan (N-linked (GlcNAc...) asparagine) is linked at asparagine 176.

It belongs to the CNF-like-inhibitor family. Occurs as a mixture of oligomers. Tetrameric arrangement appears to be the predominant quaternary structure. Expressed by the liver.

The protein resides in the secreted. Functionally, inhibits the enzymatic activity of phospholipase A2 (PA2). This Gloydius brevicaudus siniticus (Chinese mamushi) protein is Phospholipase A2 inhibitor gamma subunit A.